The chain runs to 121 residues: Large ribosomal subunit protein bL20 (121 aa).

Belongs to the bacterial ribosomal protein bL20 family.

Binds directly to 23S ribosomal RNA and is necessary for the in vitro assembly process of the 50S ribosomal subunit. It is not involved in the protein synthesizing functions of that subunit. In Orientia tsutsugamushi (strain Ikeda) (Rickettsia tsutsugamushi), this protein is Large ribosomal subunit protein bL20.